A 577-amino-acid chain; its full sequence is Arginine--tRNA ligase (577 aa).

A 'HIGH' region motif is present at residues 122–132 (PNVAKEMHVGH).

The protein belongs to the class-I aminoacyl-tRNA synthetase family. As to quaternary structure, monomer.

The protein resides in the cytoplasm. It carries out the reaction tRNA(Arg) + L-arginine + ATP = L-arginyl-tRNA(Arg) + AMP + diphosphate. The chain is Arginine--tRNA ligase from Salmonella agona (strain SL483).